A 173-amino-acid chain; its full sequence is MDPNSPMFQNTPQQPMSLQRSVDDRIDRERTAKKEKDDEKKKQEDEKILQLEKKLEEFQENARFIGDLASNFQTKYQDALNGRIYTLIRGLQDLDRMKGTFSDKNVPLDILPYLDDGKNPLLYSKHCMEKTLEKNKAVNGKIEMYKKFRAHLIKEFSEEMPDFVIEYRKERGQ.

A compositionally biased stretch (polar residues) spans 1–20 (MDPNSPMFQNTPQQPMSLQR). Positions 1 to 45 (MDPNSPMFQNTPQQPMSLQRSVDDRIDRERTAKKEKDDEKKKQED) are disordered. The segment covering 21-45 (SVDDRIDRERTAKKEKDDEKKKQED) has biased composition (basic and acidic residues).

It belongs to the Mediator complex subunit 10 family. In terms of assembly, component of the Mediator complex.

The protein resides in the nucleus. Functionally, component of the Mediator complex, a coactivator involved in the regulated transcription of nearly all RNA polymerase II-dependent genes. Mediator functions as a bridge to convey information from gene-specific regulatory proteins to the basal RNA polymerase II transcription machinery. Mediator is recruited to promoters by direct interactions with regulatory proteins and serves as a scaffold for the assembly of a functional preinitiation complex with RNA polymerase II and the general transcription factors. In Caenorhabditis briggsae, this protein is Mediator of RNA polymerase II transcription subunit 10 (mdt-10).